The following is a 211-amino-acid chain: Superoxide dismutase [Fe] (211 aa).

Fe cation contacts are provided by H34, H85, D171, and H175.

The protein belongs to the iron/manganese superoxide dismutase family. Fe cation serves as cofactor.

The enzyme catalyses 2 superoxide + 2 H(+) = H2O2 + O2. In terms of biological role, destroys superoxide anion radicals which are normally produced within the cells and which are toxic to biological systems. The polypeptide is Superoxide dismutase [Fe] (sod) (Acidianus ambivalens (Desulfurolobus ambivalens)).